We begin with the raw amino-acid sequence, 677 residues long: UvrABC system protein B (677 aa).

Residues 31-417 (DRIESGETDI…SDGVVEQIIR (387 aa)) form the Helicase ATP-binding domain. 44–51 (GATGTGKS) is a binding site for ATP. A Beta-hairpin motif is present at residues 97–120 (YYDYYQPEAYVPKTDTFIEKDASV). One can recognise a Helicase C-terminal domain in the interval 434-596 (QIDDLLEEIR…VTPVPIKKTV (163 aa)). The UVR domain maps to 629-664 (KSHIKSLEAKMYMAAESLMFEEAAELRDEIQSLKEK).

Belongs to the UvrB family. Forms a heterotetramer with UvrA during the search for lesions. Interacts with UvrC in an incision complex.

The protein resides in the cytoplasm. The UvrABC repair system catalyzes the recognition and processing of DNA lesions. A damage recognition complex composed of 2 UvrA and 2 UvrB subunits scans DNA for abnormalities. Upon binding of the UvrA(2)B(2) complex to a putative damaged site, the DNA wraps around one UvrB monomer. DNA wrap is dependent on ATP binding by UvrB and probably causes local melting of the DNA helix, facilitating insertion of UvrB beta-hairpin between the DNA strands. Then UvrB probes one DNA strand for the presence of a lesion. If a lesion is found the UvrA subunits dissociate and the UvrB-DNA preincision complex is formed. This complex is subsequently bound by UvrC and the second UvrB is released. If no lesion is found, the DNA wraps around the other UvrB subunit that will check the other stand for damage. This chain is UvrABC system protein B, found in Tropheryma whipplei (strain TW08/27) (Whipple's bacillus).